The chain runs to 118 residues: uncharacterized protein (118 aa).

The tract at residues 1-118 (MASARGAKQS…AARQNEKTAR (118 aa)) is disordered. The segment covering 13–28 (RVGTTRYTETSTVRVE) has biased composition (low complexity). Residues 29-49 (TSSHRVETSSRRVETSQRRSE) are compositionally biased toward basic and acidic residues.

This is an uncharacterized protein from Homo sapiens (Human).